The primary structure comprises 443 residues: Leucine-rich repeat-containing protein 17 (443 aa).

Positions 1–15 (MRIVAILLLFCLCRA) are cleaved as a signal peptide. The disordered stretch occupies residues 20-48 (KSSPGVLRSQGNPSRSHGRGGRRGSSPVK). LRR repeat units lie at residues 84-105 (DLLH…MFAK), 108-129 (RLKS…AFFG), and 132-153 (KLTT…AFIY). Residues 165 to 216 (NPWHCTCELETLISMLQIPRNRNLGNYAKCGSPPALRNKKLLQLKPQELCDE) enclose the LRRCT 1 domain. In terms of domain architecture, LRRNT spans 229–270 (SGIPAVIRPEADSTLCHNYVFPIQTLDCKRKELKKVPSNIPP). 3 LRR repeats span residues 271-292 (DIVK…EFED), 295-316 (ELKK…AFLG), and 319-342 (HLEE…EDLY). Residues 352–404 (NPWRCDYSIHYLYYWLKHHYNVHYNGLECKTPEEYKGWSVGKYVRSYYEECPK) form the LRRCT 2 domain.

As to expression, expressed in osteoblasts, spleen, lung and heart.

The protein resides in the secreted. Its subcellular location is the extracellular space. Functionally, involved in bone homeostasis. Acts as a negative regulator of RANKL-induced osteoclast precursor differentiation from bone marrow precursors. The sequence is that of Leucine-rich repeat-containing protein 17 (Lrrc17) from Mus musculus (Mouse).